Reading from the N-terminus, the 338-residue chain is Acetylcholinesterase (338 aa).

The N-linked (GlcNAc...) asparagine glycan is linked to Asn-8. Catalysis depends on Ser-99, which acts as the Acyl-ester intermediate. A disulfide bridge connects residues Cys-153 and Cys-164. Glu-226 functions as the Charge relay system in the catalytic mechanism.

The protein belongs to the type-B carboxylesterase/lipase family.

It is found in the synapse. It localises to the secreted. The protein localises to the cell membrane. It catalyses the reaction acetylcholine + H2O = choline + acetate + H(+). Functionally, terminates signal transduction at the neuromuscular junction by rapid hydrolysis of the acetylcholine released into the synaptic cleft. The protein is Acetylcholinesterase (ache) of Myxine glutinosa (Atlantic hagfish).